Consider the following 284-residue polypeptide: UDP-N-acetylenolpyruvoylglucosamine reductase (284 aa).

Residues 12–174 (KIGGRVKYLV…TRVMMSFKRE (163 aa)) enclose the FAD-binding PCMH-type domain. Arginine 153 is an active-site residue. Serine 203 acts as the Proton donor in catalysis. The active site involves glutamate 274.

The protein belongs to the MurB family. The cofactor is FAD.

The protein resides in the cytoplasm. The enzyme catalyses UDP-N-acetyl-alpha-D-muramate + NADP(+) = UDP-N-acetyl-3-O-(1-carboxyvinyl)-alpha-D-glucosamine + NADPH + H(+). It functions in the pathway cell wall biogenesis; peptidoglycan biosynthesis. In terms of biological role, cell wall formation. This chain is UDP-N-acetylenolpyruvoylglucosamine reductase, found in Thermotoga petrophila (strain ATCC BAA-488 / DSM 13995 / JCM 10881 / RKU-1).